Reading from the N-terminus, the 219-residue chain is Trafficking protein particle complex subunit 4 (219 aa).

The protein belongs to the TRAPP small subunits family. TRAPPC4 subfamily. In terms of assembly, component of the multisubunit TRAPP (transport protein particle) complex, which includes at least TRAPPC2, TRAPPC2L, TRAPPC3, TRAPPC3L, TRAPPC4, TRAPPC5, TRAPPC8, TRAPPC9, TRAPPC10, TRAPPC11 and TRAPPC12. Interacts with SDC2.

It is found in the postsynaptic cell membrane. The protein localises to the golgi apparatus membrane. It localises to the endoplasmic reticulum. Its subcellular location is the vesicle. Core component of the TRAPP complexes which has a function of guanine nucleotide exchange factor activity for Rab1 GTPase. Plays a role in vesicular transport from endoplasmic reticulum to Golgi and autophagy. May play a role in dendrite postsynaptic membrane trafficking. This is Trafficking protein particle complex subunit 4 from Homo sapiens (Human).